We begin with the raw amino-acid sequence, 715 residues long: Polyribonucleotide nucleotidyltransferase (715 aa).

Asp493 and Asp499 together coordinate Mg(2+). The KH domain occupies 560–619; the sequence is PRMITVKINPEKIRDVIGKGGSVIRALTEETGTTIDISDDGVVTIASTSSEGMAEAKKRI. The S1 motif domain occupies 629–697; sequence GQVYEGTVLK…EKGRVRLSAK (69 aa).

The protein belongs to the polyribonucleotide nucleotidyltransferase family. Requires Mg(2+) as cofactor.

Its subcellular location is the cytoplasm. It catalyses the reaction RNA(n+1) + phosphate = RNA(n) + a ribonucleoside 5'-diphosphate. In terms of biological role, involved in mRNA degradation. Catalyzes the phosphorolysis of single-stranded polyribonucleotides processively in the 3'- to 5'-direction. This Burkholderia cenocepacia (strain HI2424) protein is Polyribonucleotide nucleotidyltransferase.